Reading from the N-terminus, the 211-residue chain is ATP phosphoribosyltransferase (211 aa).

This sequence belongs to the ATP phosphoribosyltransferase family. Short subfamily. As to quaternary structure, heteromultimer composed of HisG and HisZ subunits.

The protein resides in the cytoplasm. The enzyme catalyses 1-(5-phospho-beta-D-ribosyl)-ATP + diphosphate = 5-phospho-alpha-D-ribose 1-diphosphate + ATP. Its pathway is amino-acid biosynthesis; L-histidine biosynthesis; L-histidine from 5-phospho-alpha-D-ribose 1-diphosphate: step 1/9. Functionally, catalyzes the condensation of ATP and 5-phosphoribose 1-diphosphate to form N'-(5'-phosphoribosyl)-ATP (PR-ATP). Has a crucial role in the pathway because the rate of histidine biosynthesis seems to be controlled primarily by regulation of HisG enzymatic activity. The chain is ATP phosphoribosyltransferase from Bacillus cereus (strain B4264).